The primary structure comprises 341 residues: Aspartate carbamoyltransferase catalytic subunit (341 aa).

Carbamoyl phosphate-binding residues include Arg-89 and Thr-90. Lys-117 provides a ligand contact to L-aspartate. Residues Arg-139, His-169, and Gln-172 each contribute to the carbamoyl phosphate site. Arg-202 and Arg-257 together coordinate L-aspartate. Positions 298 and 299 each coordinate carbamoyl phosphate.

The protein belongs to the aspartate/ornithine carbamoyltransferase superfamily. ATCase family. As to quaternary structure, heterododecamer (2C3:3R2) of six catalytic PyrB chains organized as two trimers (C3), and six regulatory PyrI chains organized as three dimers (R2).

The enzyme catalyses carbamoyl phosphate + L-aspartate = N-carbamoyl-L-aspartate + phosphate + H(+). It participates in pyrimidine metabolism; UMP biosynthesis via de novo pathway; (S)-dihydroorotate from bicarbonate: step 2/3. In terms of biological role, catalyzes the condensation of carbamoyl phosphate and aspartate to form carbamoyl aspartate and inorganic phosphate, the committed step in the de novo pyrimidine nucleotide biosynthesis pathway. This Paraburkholderia xenovorans (strain LB400) protein is Aspartate carbamoyltransferase catalytic subunit.